A 236-amino-acid polypeptide reads, in one-letter code: Virion protein US10 homolog (236 aa).

The interval 1-32 is disordered; the sequence is MDGAYGHVHNGSPMAVDGEESGAGTGTGAGAD. Over residues 21–31 the composition is skewed to gly residues; sequence SGAGTGTGAGA. A zinc finger lies at 138–150; the sequence is CAYWCCLGHAFAC.

Belongs to the herpesviridae US10 family. In terms of processing, phosphorylated.

Its subcellular location is the virion tegument. It localises to the host nucleus matrix. The chain is Virion protein US10 homolog from Equine herpesvirus 1 (strain Ab4p) (EHV-1).